Consider the following 782-residue polypeptide: DNA repair and recombination protein RAD54-like (782 aa).

Residues 1-20 (MRRSLAPSQRGGQRLSSRND) are compositionally biased toward polar residues. The tract at residues 1–28 (MRRSLAPSQRGGQRLSSRNDFTPPLLKK) is disordered. Residues 2–9 (RRSLAPSQ) are required for chromatin remodeling, strand pairing activities and coupling of ATPase activity. T22 is modified (phosphothreonine). Residues 168–343 (EGKRGNFNGC…FSLVNFVNPE (176 aa)) form the Helicase ATP-binding domain. 181 to 188 (DEMGLGKT) is a binding site for ATP. The short motif at 294-297 (DEGH) is the DEGH box element. A Helicase C-terminal domain is found at 501-658 (LLDFMLAAIR…NNESAEKHFT (158 aa)). Over residues 741–753 (SQKIEATPATETS) the composition is skewed to polar residues. The interval 741–782 (SQKIEATPATETSVEAKLEPERRKRPAMPLSDDSADEDFQGF) is disordered. Over residues 773–782 (DSADEDFQGF) the composition is skewed to acidic residues.

This sequence belongs to the SNF2/RAD54 helicase family. In terms of assembly, interacts (via N-terminus) with spn-A/Rad51.

It localises to the nucleus. In terms of biological role, involved in mitotic DNA repair and meiotic recombination. Functions in the recombinational DNA repair pathway. Essential for interhomolog gene conversion (GC), but may have a less important role in intersister GC than spn-A/Rad51. In the presence of DNA, spn-A/Rad51 enhances the ATPase activity of okr/Rad54. This Drosophila persimilis (Fruit fly) protein is DNA repair and recombination protein RAD54-like.